Consider the following 249-residue polypeptide: Hydroxyacylglutathione hydrolase (249 aa).

Zn(2+) contacts are provided by His53, His55, Asp57, His58, His110, Asp127, and His165.

Belongs to the metallo-beta-lactamase superfamily. Glyoxalase II family. As to quaternary structure, monomer. The cofactor is Zn(2+).

It carries out the reaction an S-(2-hydroxyacyl)glutathione + H2O = a 2-hydroxy carboxylate + glutathione + H(+). It functions in the pathway secondary metabolite metabolism; methylglyoxal degradation; (R)-lactate from methylglyoxal: step 2/2. In terms of biological role, thiolesterase that catalyzes the hydrolysis of S-D-lactoyl-glutathione to form glutathione and D-lactic acid. The sequence is that of Hydroxyacylglutathione hydrolase from Buchnera aphidicola subsp. Baizongia pistaciae (strain Bp).